The following is a 457-amino-acid chain: MITREFDTIAAISTPLGEGAIGIVRLSGTDSFAIAQKIFKGKDLNKVASHTLNYGHIIDPLTGKVMDEVMVGAMKSPKTFTREDIIEINTHGGIAVTNEILQLAIREGARLAEPGEFTKRAFLNGRVDLTQAEAVMDIIRAKTDKAMNIAVKQLDGSLSDLINNIRQEILNTLAQVEVNIDYPEYDDVEEATTAVVREKTMEFEQLLTKLLRTARRGKILREGISTAIIGRPNVGKSSLLNNLLREDKAIVTDIAGTTRDVIEEYVNINGVPLKLIDTAGIRETDDIVEQIGVERSKKALKEADLVLLVLNASEPLTAQDRQLLEISQDTNRIILLNKTDLPETIETSKLPEDVIRISVLKNQNIDKIEERINNLFFENAGLVEQDATYLSNARHISLIEKAVESLQAVNQGLELGMPVDLLQVDLTRTWEILGEITGDAAPDELITQLFSQFCLGK.

(6S)-5-formyl-5,6,7,8-tetrahydrofolate contacts are provided by Arg-25, Glu-87, and Arg-126. Positions 223-377 (GISTAIIGRP…IEERINNLFF (155 aa)) constitute a TrmE-type G domain. Asn-233 contacts K(+). Residues 233–238 (NVGKSS), 252–258 (TDIAGTT), and 277–280 (DTAG) contribute to the GTP site. Ser-237 contributes to the Mg(2+) binding site. K(+) contacts are provided by Thr-252, Ile-254, and Thr-257. Position 258 (Thr-258) interacts with Mg(2+). Lys-457 serves as a coordination point for (6S)-5-formyl-5,6,7,8-tetrahydrofolate.

Belongs to the TRAFAC class TrmE-Era-EngA-EngB-Septin-like GTPase superfamily. TrmE GTPase family. Homodimer. Heterotetramer of two MnmE and two MnmG subunits. The cofactor is K(+).

The protein localises to the cytoplasm. Exhibits a very high intrinsic GTPase hydrolysis rate. Involved in the addition of a carboxymethylaminomethyl (cmnm) group at the wobble position (U34) of certain tRNAs, forming tRNA-cmnm(5)s(2)U34. This Streptococcus pneumoniae (strain Hungary19A-6) protein is tRNA modification GTPase MnmE.